The primary structure comprises 110 residues: Putative zinc finger protein ORF110 (110 aa).

The C2H2-type zinc-finger motif lies at 3–26 (YVCTACKLKFHTFEEFKIHVHLFH).

The sequence is that of Putative zinc finger protein ORF110 from Acidianus filamentous virus 1 (isolate United States/Yellowstone) (AFV-1).